Here is a 188-residue protein sequence, read N- to C-terminus: MKQLCCSCLLWLGLLLAPFSQEQEEVTSPTKLCGRDLLVEVIKLCGQNDWSRFSMEEQSPMTELVPQYTRKVKTFNPHRSSSSWGRFTNPGVSQKKATHTWESQSLPNYQLKKEELLPKTGVHSYHGGKPYVKSVKFQKKNTDKMSTFSGLFWGNHPQRKRRGFADKCCAIGCSKEELAVACLPFVDF.

Positions 1–22 are cleaved as a signal peptide; sequence MKQLCCSCLLWLGLLLAPFSQE. Disulfide bonds link Cys-33/Cys-169, Cys-45/Cys-182, and Cys-168/Cys-173. The propeptide at 53 to 158 is connecting peptide; it reads FSMEEQSPMT…SGLFWGNHPQ (106 aa).

It belongs to the insulin family. Testis and prostate specific.

Its subcellular location is the secreted. In terms of biological role, may have a role in sperm development and fertilization. This is Insulin-like peptide INSL6 (Insl6) from Rattus norvegicus (Rat).